The primary structure comprises 807 residues: MNDHTTIAASGGRLSDRELHDLDAYWRAANYLTIGQIYLLDNPLLREPLRLEHVKPRLLGHWGTSPGLSFIYAHLNRAIRLRDANVIYICGPGHGGPAMVANTYLEGTYSELNPDIAMDEQGMRKLFRQFSFPGGIPSHAAPDVPGSIHEGGELGYSLSHAYGAAFDNPDLVVACVVGDGEAETGPLAAAWHSNKFLNPARDGAVLPILHLNGYKIANPTILARIPEDELRALFAGYGYEPLFVAGHEPALMHQRMATVLDDAFDRISAIKHAARNGSGATGSRPEWPMIVLRSPKGWTGPKEVDGLKTEGFWRSHQVPLSGLAENPAHLKLLEEWLKSYRPEELFDAAGAPVASIRATAPQATKRMSANPHANGGLLRRSLELPGLHDHAVSLERPGAVKAESTRVMGSFLRDVMRLNEVAKNFRIVGPDETASNRLQDVFEVTERGWMEKILPEDVHLGREGRVLEILSEHTCQGWLEGYLLTGRHGLFSCYEAFIHIVDSMFNQHAKWLDACREIPWRRPIASLNYLLSSHVWHQEHNGFSHQDPGFIDVALNKKADIVRVYLPPDANTLLCVTDHVLQTWNRINVIVAGKPPSWQWLSMDKAIVHCRAGIGVWDWASTDDGAEPDVVMACAGDVPTLETLAAVQILRQQVPDLRIRVVNVVDLMTLQPKEYHPHGLSDREFDALFTPDKPVIFAYHGYPWTIHRLTYRRTNHDNIHVRGYNEEGTTTTPFDMTVLNGLDRFHIVQSVLDWVPRLKGVRVSLKQAMDSKLLEHRAYICSHGQDMPEILDWKWGQDPDAAPKRPD.

Belongs to the XFP family. Requires thiamine diphosphate as cofactor.

In Mesorhizobium japonicum (strain LMG 29417 / CECT 9101 / MAFF 303099) (Mesorhizobium loti (strain MAFF 303099)), this protein is Probable phosphoketolase.